Consider the following 202-residue polypeptide: Large ribosomal subunit protein bL25 (202 aa).

It belongs to the bacterial ribosomal protein bL25 family. CTC subfamily. In terms of assembly, part of the 50S ribosomal subunit; part of the 5S rRNA/L5/L18/L25 subcomplex. Contacts the 5S rRNA. Binds to the 5S rRNA independently of L5 and L18.

This is one of the proteins that binds to the 5S RNA in the ribosome where it forms part of the central protuberance. The sequence is that of Large ribosomal subunit protein bL25 from Chlorobium luteolum (strain DSM 273 / BCRC 81028 / 2530) (Pelodictyon luteolum).